A 693-amino-acid chain; its full sequence is Polyribonucleotide nucleotidyltransferase (693 aa).

Residues Asp-487 and Asp-493 each contribute to the Mg(2+) site. The KH domain maps to 554-613; the sequence is PRIYTIKINPEKIKDVIGKGGSIIRMLTEETGTVIEIKDDGIVKISAINGEKAKYAIKRI. The 69-residue stretch at 623–691 folds into the S1 motif domain; the sequence is GKIYSGKVTR…RQGRIRLSMK (69 aa).

It belongs to the polyribonucleotide nucleotidyltransferase family. In terms of assembly, component of the RNA degradosome, which is a multiprotein complex involved in RNA processing and mRNA degradation. The cofactor is Mg(2+).

The protein resides in the cytoplasm. The catalysed reaction is RNA(n+1) + phosphate = RNA(n) + a ribonucleoside 5'-diphosphate. Functionally, involved in mRNA degradation. Catalyzes the phosphorolysis of single-stranded polyribonucleotides processively in the 3'- to 5'-direction. The polypeptide is Polyribonucleotide nucleotidyltransferase (Buchnera aphidicola subsp. Cinara cedri (strain Cc)).